Here is a 311-residue protein sequence, read N- to C-terminus: tRNA pseudouridine synthase B (311 aa).

The Nucleophile role is filled by D49.

This sequence belongs to the pseudouridine synthase TruB family. Type 1 subfamily.

The enzyme catalyses uridine(55) in tRNA = pseudouridine(55) in tRNA. Responsible for synthesis of pseudouridine from uracil-55 in the psi GC loop of transfer RNAs. This Rhizobium meliloti (strain 1021) (Ensifer meliloti) protein is tRNA pseudouridine synthase B.